Reading from the N-terminus, the 262-residue chain is Phosphatidylglycerol--prolipoprotein diacylglyceryl transferase 1 (262 aa).

The next 4 membrane-spanning stretches (helical) occupy residues 15–35 (WYGIIIALGILIAMTLVSINA), 40–60 (LNFDVILDLFLWCFPFAIIGA), 83–103 (QGGLAIHGGIIGAFLTAFIYC), and 108–128 (VDFLAYADIVAPAFILAQGIG). Arg-129 serves as a coordination point for a 1,2-diacyl-sn-glycero-3-phospho-(1'-sn-glycerol). 3 helical membrane-spanning segments follow: residues 169 to 189 (TFLYESIWDIFVAILLMIILY), 197 to 217 (GVVISAYISLYSLGRFFIEGL), and 229 to 249 (VAQLVSLLGIIIGIVAIIIIV).

It belongs to the Lgt family.

The protein localises to the cell membrane. It catalyses the reaction L-cysteinyl-[prolipoprotein] + a 1,2-diacyl-sn-glycero-3-phospho-(1'-sn-glycerol) = an S-1,2-diacyl-sn-glyceryl-L-cysteinyl-[prolipoprotein] + sn-glycerol 1-phosphate + H(+). Its pathway is protein modification; lipoprotein biosynthesis (diacylglyceryl transfer). Functionally, catalyzes the transfer of the diacylglyceryl group from phosphatidylglycerol to the sulfhydryl group of the N-terminal cysteine of a prolipoprotein, the first step in the formation of mature lipoproteins. In Clostridium perfringens (strain 13 / Type A), this protein is Phosphatidylglycerol--prolipoprotein diacylglyceryl transferase 1.